The primary structure comprises 151 residues: Deoxyuridine 5'-triphosphate nucleotidohydrolase (151 aa).

Substrate contacts are provided by residues 70-72, asparagine 83, 87-89, and methionine 97; these read RSG and LID.

Belongs to the dUTPase family. Requires Mg(2+) as cofactor.

The enzyme catalyses dUTP + H2O = dUMP + diphosphate + H(+). It functions in the pathway pyrimidine metabolism; dUMP biosynthesis; dUMP from dCTP (dUTP route): step 2/2. Its function is as follows. This enzyme is involved in nucleotide metabolism: it produces dUMP, the immediate precursor of thymidine nucleotides and it decreases the intracellular concentration of dUTP so that uracil cannot be incorporated into DNA. This is Deoxyuridine 5'-triphosphate nucleotidohydrolase from Shigella sonnei (strain Ss046).